The sequence spans 304 residues: N-acetylmuramic acid 6-phosphate etherase (304 aa).

One can recognise an SIS domain in the interval 58–221 (IVDRMKQGGR…TTASMVKMGK (164 aa)). Catalysis depends on E86, which acts as the Proton donor. E117 is a catalytic residue.

The protein belongs to the GCKR-like family. MurNAc-6-P etherase subfamily. As to quaternary structure, homodimer.

It catalyses the reaction N-acetyl-D-muramate 6-phosphate + H2O = N-acetyl-D-glucosamine 6-phosphate + (R)-lactate. It participates in amino-sugar metabolism; N-acetylmuramate degradation. In terms of biological role, specifically catalyzes the cleavage of the D-lactyl ether substituent of MurNAc 6-phosphate, producing GlcNAc 6-phosphate and D-lactate. This Clostridioides difficile (strain 630) (Peptoclostridium difficile) protein is N-acetylmuramic acid 6-phosphate etherase.